Consider the following 186-residue polypeptide: Threonylcarbamoyl-AMP synthase (186 aa).

One can recognise a YrdC-like domain in the interval 3-186; sequence ILSLSECVDR…IINGSLIRHG (184 aa).

The protein belongs to the SUA5 family. TsaC subfamily.

Its subcellular location is the cytoplasm. It catalyses the reaction L-threonine + hydrogencarbonate + ATP = L-threonylcarbamoyladenylate + diphosphate + H2O. Functionally, required for the formation of a threonylcarbamoyl group on adenosine at position 37 (t(6)A37) in tRNAs that read codons beginning with adenine. Catalyzes the conversion of L-threonine, HCO(3)(-)/CO(2) and ATP to give threonylcarbamoyl-AMP (TC-AMP) as the acyladenylate intermediate, with the release of diphosphate. The polypeptide is Threonylcarbamoyl-AMP synthase (Buchnera aphidicola subsp. Baizongia pistaciae (strain Bp)).